A 557-amino-acid polypeptide reads, in one-letter code: TNF receptor-associated factor 5 (557 aa).

The segment at 45–85 (CAFCHSVLHNPHQTGCGHRFCQHCILSLRELNTVPICPVDK) adopts an RING-type zinc-finger fold. TRAF-type zinc fingers lie at residues 127-181 (DHLQ…INLQ) and 182-239 (NHEE…RNLQ). Residues 237–342 (NLQQHEHSAL…VNQQQNKFDL (106 aa)) adopt a coiled-coil conformation. Lys318 is covalently cross-linked (Glycyl lysine isopeptide (Lys-Gly) (interchain with G-Cter in ubiquitin)). An interaction with EIF2AK2/PKR region spans residues 345 to 557 (LMEAVDTVKQ…AVDLTDLEDL (213 aa)). The MATH domain maps to 403–549 (NGKLIWKVTD…DDTLFLKVAV (147 aa)).

Belongs to the TNF receptor-associated factor family. A subfamily. Homotrimer. Heteromer with TRAF3. Associates with TNFRSF5/CD40 through interaction with TRAF3. Associates with LTBR/TNFRSF3, TNFRSF4, TNFRSF8/CD30, TNFRSF11A/RANK, TNFRSF13B/TACI, TNFRSF14, TNFRSF17, TNFRSF19/TROY, RIPK2, MAP3K14, MAP3K5, and TRAF and TNF receptor associated protein TDP2. Interacts (via C-terminus) with EIF2AK2/PKR (via the kinase catalytic domain). Post-translationally, ubiquitinated at Lys-318 by the SCF(FBXL2) complex, leading to its degradation by the proteasome. Expressed in spleen, thymus, prostate, testis, ovary, small intestine, colon, and peripheral blood.

Its subcellular location is the cytoplasm. The protein localises to the cytosol. Its function is as follows. Adapter protein and signal transducer that links members of the tumor necrosis factor receptor family to different signaling pathways by association with the receptor cytoplasmic domain and kinases. Mediates activation of NF-kappa-B and probably JNK. Seems to be involved in apoptosis. Plays a role in mediating activation of NF-kappa-B by EIF2AK2/PKR. The polypeptide is TNF receptor-associated factor 5 (TRAF5) (Homo sapiens (Human)).